The chain runs to 1026 residues: HEAT repeat-containing protein 4 (1026 aa).

Residues A135–L175 form a disordered region. 3 HEAT repeats span residues L530–Q568, K724–D760, and K761–S794.

The chain is HEAT repeat-containing protein 4 (HEATR4) from Homo sapiens (Human).